The chain runs to 33 residues: GLLDTFKNLALNAAKSAGVSVLNSLSCKLSKTC.

Residues cysteine 27 and cysteine 33 are joined by a disulfide bond.

Expressed by the skin glands.

The protein resides in the secreted. Has antibacterial activity against E.coli ATCC 25992 (MIC=38 uM), E.coli CIB 84492 (MIC=38 uM), S.aureus ATCC 25923 (MIC=19 uM) and S.aureus CIB 85462 (MIC=19 uM). Has antifungal activity against C.albicans (MIC=19 uM). Has weak hemolytic activity against rabbit erythrocytes. In Odorrana jingdongensis (Jingdong frog), this protein is Brevinin-2JD.